We begin with the raw amino-acid sequence, 760 residues long: Ring-infected erythrocyte surface antigen (760 aa).

Residues Asp214 to Ala300 form a disordered region. The segment covering Ser216–Val230 has biased composition (acidic residues). Basic and acidic residues predominate over residues Asp231–Asp242. Positions Glu243–Val256 are enriched in acidic residues. Positions Ala262–Glu288 are enriched in basic and acidic residues. One can recognise a J domain in the interval Asp307–Asp375. Residues Asn425, Asn559, and Asn563 are each glycosylated (N-linked (GlcNAc...) asparagine). Residues Glu683 to His692 are compositionally biased toward basic and acidic residues. The disordered stretch occupies residues Glu683–Pro738. Positions Asp693–Asn720 are enriched in acidic residues.

It is found in the cell membrane. In terms of biological role, may disrupt the normal intermolecular interactions of the cytoplasmic domain of band 3 and thereby facilitate the invagination of the red cell membrane which is necessary for the formation of the parasitophorous vacuole. The chain is Ring-infected erythrocyte surface antigen (RESA) from Plasmodium falciparum (isolate NF7 / Ghana).